The chain runs to 1955 residues: MSATRGGPDQGPSQPQQRRIIRTQTAGNLGESFDSEVVPSSLVEIAPILRVANEVESSNPRVAYLCRFYAFEKAHRLDPTSSGRGVRQFKTALLQRLEREHDPTLMGRVKKSDAREMQSFYQHYYKKYIQALHNAADKADRAQLTKAYQTANVLFEVLKAVNLTQSIEVDREILEAQDKVAEKTQLYVPYNILPLDPDSANQAIMRYPEIQAAVLALRNTRGLPWPEGHKKKKDEDMLDWLQEMFGFQKDNVANQREHLILLLANVHIRQFPKPDQQPKLDDQALTEVMKKLFKNYKKWCKYLGRKSSLWLPTIQQEMQQRKLLYMALYLLIWGEAANLRFMPECLCYIYHHMAFELYGMLAGNVSPMTGENVKPAYGGEEDAFLRKVVTPIYEVIQMEAQRSKKGKSKHSQWRNYDDLNEYFWSVDCFRLGWPMRADADFFCLPVAVPNTEKDGDNSKPIVARDRWVGKVNFVEIRSFWHVFRSFDRMWSFYILCLQAMIIMAWDGGQPSSVFGADVFKKVLSVFITAAIMKLGQAVLDVILNFKAHQSMTLHVKLRYILKVFSAAAWVIILPVTYAYSWKDPPAFARTIKSWFGSAMHSPSLFIIAVVSYLSPNMLAGVMFLFPLLRRFLERSNYRIVMLMMWWSQPRLYVGRGMHESAFSLFKYTMFWVLLIATKLAFSYYIEIRPLVAPTQAIMKARVTNFQWHEFFPRAKNNIGVVIALWAPIILVYFMDSQIWYAIFSTLFGGIYGAFRRLGEIRTLGMLRSRFESLPGAFNDRLIPDGKNQQKKKGIRATLSHNFTEDKVPVNKEKEAARFAQLWNTIISSFREEDLISDREMDLLLVPYWADRDLDLIQWPPFLLASKIPIALDMAKDSNGKDRELKKRIESDTYMKCAVRECYASFKNIIKFVVQGNREKEVIEIIFAEVDKHIDTGDLIQEYKMSALPSLYDHFVKLIKYLLDNKEEDRDHVVILFQDMLEVVTRDIMMEDYNISSLVDSSHGGTWHGGMIPLEQQYQLFASSGAIRFPIEPVTEAWKEKIKRIYLLLTTKESAMDVPSNLEARRRISFFSNSLFMDMPMAPKVRNMLSFSVLTPYYTEEVLFSLRDLETPNEDGVSILFYLQKIFPDEWNNFLERVKCLSEEELKESDELEEELRLWASYRGQTLTRTVRGMMYYRKALELQAFLDMAMHEDLMEGYKAVELNSENNSRGERSLWAQCQAVADMKFTYVVSCQQYGIHKRSGDPRAQDILRLMTRYPSLRVAYIDEVEEPVKDKSKKGNQKVYYSVLVKVPKSTDHSTLAQNLDQVIYRIRLPGPAILGEGKPENQNHAIIFSRGEGLQTIDMNQDNYMEEALKMRNLLQEFLTKHDGVRHPSILGLREHIFTGSVSSLAWFMSNQETSFVTIGQRLLANPLRVRFHYGHPDVFDRLFHLTRGGVSKASKVINLSEDIFAGFNSTLREGNVTHHEYIQVGKGRDVGLNQISMFEAKIANGNGEQTLSRDIYRLGHRFDFFRMMSCYFTTVGFYFSTLITVLTVYIFLYGRLYLVLSGLEQGLSTQKGIRDNTPLQIALASQSFVQIGFLMALPMLMEIGLERGFRTALSEFVLMQLQLAPVFFTFSLGTKTHYYGRTLLHGGAKYRSTGRGFVVFHAKFADNYRLYSRSHFVKGLEMMLLLVVYQIFGSAYRGVLAYLLITISMWFMVGTWLFAPFLFNPSGFEWQKIVDDWTDWNKWINNIGGIGVPAEKSWESWWEEEQEHLRYSGKRGIVVEILLALRFFIYQYGLVYHLTITEKTKNFLVYGVSWLVIFLILFVMKTVSVGRRRFSASFQLMFRLIKGLIFMTFIAIIVILITLAHMTIQDIIVCILAFMPTGWGMLLIAQACKPVVHRAGFWGSVRTLARGYEIVMGLLLFTPVAFLAWFPFVSEFQTRMLFNQAFSRGLQISRILGGHRKDRSSRNKE.

The Cytoplasmic portion of the chain corresponds to methionine 1 to arginine 488. Residues methionine 489–glutamine 509 traverse the membrane as a helical segment. The Extracellular portion of the chain corresponds to proline 510–lysine 521. The chain crosses the membrane as a helical span at residues valine 522–isoleucine 542. Topologically, residues leucine 543 to arginine 558 are cytoplasmic. A helical membrane pass occupies residues tyrosine 559–tyrosine 579. At serine 580–leucine 604 the chain is on the extracellular side. The chain crosses the membrane as a helical span at residues phenylalanine 605–phenylalanine 625. Residues proline 626–serine 660 are Cytoplasmic-facing. Residues alanine 661–phenylalanine 681 traverse the membrane as a helical segment. Over serine 682–asparagine 717 the chain is Extracellular. Residues isoleucine 718 to isoleucine 738 form a helical membrane-spanning segment. Residues tryptophan 739 to tyrosine 1517 are Cytoplasmic-facing. Residues phenylalanine 1518 to leucine 1538 form a helical membrane-spanning segment. At tyrosine 1539–glutamine 1566 the chain is on the extracellular side. A helical transmembrane segment spans residues isoleucine 1567–methionine 1587. At glutamate 1588–threonine 1597 the chain is on the cytoplasmic side. Residues alanine 1598–leucine 1618 form a helical membrane-spanning segment. Residues glycine 1619–histidine 1661 lie on the Extracellular side of the membrane. Residues phenylalanine 1662–tyrosine 1682 traverse the membrane as a helical segment. Residues arginine 1683 to tyrosine 1688 are Cytoplasmic-facing. A helical membrane pass occupies residues leucine 1689–phenylalanine 1709. Topologically, residues asparagine 1710–arginine 1761 are extracellular. The chain crosses the membrane as a helical span at residues glycine 1762–tyrosine 1782. At histidine 1783–asparagine 1792 the chain is on the cytoplasmic side. The chain crosses the membrane as a helical span at residues phenylalanine 1793 to valine 1813. The Extracellular portion of the chain corresponds to serine 1814–glycine 1833. A helical membrane pass occupies residues leucine 1834–isoleucine 1854. Topologically, residues glutamine 1855–aspartate 1856 are cytoplasmic. The chain crosses the membrane as a helical span at residues isoleucine 1857–alanine 1877. Over cysteine 1878–glutamate 1899 the chain is Extracellular. The helical transmembrane segment at isoleucine 1900 to serine 1920 threads the bilayer. Residues glutamate 1921–glutamate 1955 are Cytoplasmic-facing.

This sequence belongs to the glycosyltransferase 48 family.

It is found in the cell membrane. The catalysed reaction is [(1-&gt;3)-beta-D-glucosyl](n) + UDP-alpha-D-glucose = [(1-&gt;3)-beta-D-glucosyl](n+1) + UDP + H(+). In terms of biological role, involved in callose synthesis at the forming cell plate during cytokinesis. During plant growth and development, callose is found as a transitory component of the cell plate in dividing cells, is a major component of pollen mother cell walls and pollen tubes, and is found as a structural component of plasmodesmatal canals. The polypeptide is Callose synthase 3 (CALS3) (Arabidopsis thaliana (Mouse-ear cress)).